The chain runs to 403 residues: Fasciclin-like arabinogalactan protein 2 (403 aa).

The first 26 residues, 1–26 (MAYLRRAATALVLIFQLHLFLSLSNA), serve as a signal peptide directing secretion. 2 consecutive FAS1 domains span residues 27–174 (HNIT…SQVL) and 187–326 (SDLI…DKVL). 4 N-linked (GlcNAc...) asparagine glycosylation sites follow: N28, N130, N164, and N248. Positions 338 to 371 (SAPAPKSSKKKPKNAEADADGPSADAPSDDDVEV) are disordered. The GPI-anchor amidated alanine moiety is linked to residue A378. A propeptide spans 379–403 (VSAMITRTSNVVTAIVGLCFGVWLM) (removed in mature form).

The protein belongs to the fasciclin-like AGP family. In terms of tissue distribution, expressed mainly in flowers and to a lesser extent in leaves and roots.

Its subcellular location is the cell membrane. May be a cell surface adhesion protein. This is Fasciclin-like arabinogalactan protein 2 (FLA2) from Arabidopsis thaliana (Mouse-ear cress).